The primary structure comprises 69 residues: Sec-independent protein translocase protein TatA (69 aa).

Residues 1-21 form a helical membrane-spanning segment; the sequence is MFPKLGMGELVVILLIVVILF. The disordered stretch occupies residues 43-69; sequence SFSGEDEEKPSTPGATSSDEASKAKQA.

This sequence belongs to the TatA/E family. In terms of assembly, the Tat system comprises two distinct complexes: a TatABC complex, containing multiple copies of TatA, TatB and TatC subunits, and a separate TatA complex, containing only TatA subunits. Substrates initially bind to the TatABC complex, which probably triggers association of the separate TatA complex to form the active translocon.

The protein resides in the cell inner membrane. In terms of biological role, part of the twin-arginine translocation (Tat) system that transports large folded proteins containing a characteristic twin-arginine motif in their signal peptide across membranes. TatA could form the protein-conducting channel of the Tat system. The chain is Sec-independent protein translocase protein TatA from Anaeromyxobacter sp. (strain Fw109-5).